We begin with the raw amino-acid sequence, 287 residues long: tRNA N(3)-cytidine methyltransferase METTL6 (287 aa).

S-adenosyl-L-methionine contacts are provided by tryptophan 45, tyrosine 49, glycine 87, aspartate 110, aspartate 136, leucine 137, and isoleucine 157. A disordered region spans residues 267–287 (RKPPKDPAPTTDSASLLRKEF).

The protein belongs to the methyltransferase superfamily. METL family. As to quaternary structure, monomer. Interacts with SARS1/SerRS; interaction is mediated via tRNA(Ser) and is required for N(3)-methylcytidine methylation.

The protein localises to the cytoplasm. The protein resides in the nucleus. The enzyme catalyses cytidine(32) in tRNA(Ser) + S-adenosyl-L-methionine = N(3)-methylcytidine(32) in tRNA(Ser) + S-adenosyl-L-homocysteine + H(+). Functionally, S-adenosyl-L-methionine-dependent methyltransferase that mediates N(3)-methylcytidine modification of residue 32 of the tRNA anticodon loop of tRNA(Ser), including tRNA(Ser)(UGA) and tRNA(Ser)(GCU). Interaction with SARS1/SerRS is required for N(3)-methylcytidine methylation. In Rattus norvegicus (Rat), this protein is tRNA N(3)-cytidine methyltransferase METTL6 (Mettl6).